A 253-amino-acid polypeptide reads, in one-letter code: ABC transporter D-alanine-binding periplasmic protein (253 aa).

The first 22 residues, 1-22 (MLSKKFGLSMIVLGIMSSSAFA), serve as a signal peptide directing secretion. Residues G95, S97, R102, A147, and E191 each coordinate D-alanine.

Belongs to the bacterial solute-binding protein 3 family. Monomer.

The protein localises to the periplasm. Part of the ABC transporter complex dalSTUV, that imports D-alanine into the cytoplasm. Helps protect the organism from oxidative killing by host neutrophils through sequestration of D-alanine, a substrate that is converted to hydrogen peroxide by the host enzyme DAO (D-amino acid oxidase). DalS shuttles D-alanine from the periplasm to the DalTUV complex situated in the inner membrane and through hydrolysis of ATP, D-alanine is transported across the membrane into the cytoplasm. Not required for the metabolism of D-alanine found in the stem peptide of peptidoglycan. The chain is ABC transporter D-alanine-binding periplasmic protein from Salmonella typhimurium (strain LT2 / SGSC1412 / ATCC 700720).